Reading from the N-terminus, the 188-residue chain is Molybdopterin synthase catalytic subunit (188 aa).

A compositionally biased stretch (low complexity) spans 1–14; that stretch reads MTTQPPQDQTSTTP. The tract at residues 1-23 is disordered; the sequence is MTTQPPQDQTSTTPSLPPHLDPT. Substrate-binding positions include 134-135, Lys-150, and 157-159; these read HR and KRE.

It belongs to the MoaE family. MOCS2B subfamily. In terms of assembly, heterotetramer; composed of 2 small (MOCS2A) and 2 large (MOCS2B) subunits.

It is found in the cytoplasm. It catalyses the reaction 2 [molybdopterin-synthase sulfur-carrier protein]-C-terminal-Gly-aminoethanethioate + cyclic pyranopterin phosphate + H2O = molybdopterin + 2 [molybdopterin-synthase sulfur-carrier protein]-C-terminal Gly-Gly + 2 H(+). It functions in the pathway cofactor biosynthesis; molybdopterin biosynthesis. In terms of biological role, catalytic subunit of the molybdopterin synthase complex, a complex that catalyzes the conversion of precursor Z into molybdopterin. Acts by mediating the incorporation of 2 sulfur atoms from thiocarboxylated MOCS2A into precursor Z to generate a dithiolene group. In Neosartorya fischeri (strain ATCC 1020 / DSM 3700 / CBS 544.65 / FGSC A1164 / JCM 1740 / NRRL 181 / WB 181) (Aspergillus fischerianus), this protein is Molybdopterin synthase catalytic subunit.